The sequence spans 89 residues: Large ribosomal subunit protein bL27 (89 aa).

The segment at 1 to 20 (MAHKKAGGSSRNGRDSESKR) is disordered.

It belongs to the bacterial ribosomal protein bL27 family.

This chain is Large ribosomal subunit protein bL27, found in Bartonella bacilliformis (strain ATCC 35685 / KC583 / Herrer 020/F12,63).